A 455-amino-acid chain; its full sequence is Cysteinylglycine-S-conjugate dipeptidase (455 aa).

His92 lines the Zn(2+) pocket. Asp94 is a catalytic residue. Position 125 (Asp125) interacts with Zn(2+). The Proton acceptor role is filled by Glu158. Residues Glu159, Glu163, and His428 each contribute to the Zn(2+) site.

The protein belongs to the peptidase M20F family. The cofactor is Zn(2+).

It catalyses the reaction an S-substituted L-cysteinylglycine + H2O = an S-substituted L-cysteine + glycine. It carries out the reaction S-(1-hydroxy-3-methylhexan-3-yl)-L-cysteinylglycine + H2O = S-(1-hydroxy-3-methylhexan-3-yl)-L-cysteine + glycine. The enzyme catalyses S-benzyl-L-cysteinylglycine + H2O = S-benzyl-L-cysteine + glycine. Functionally, metallopeptidase that hydrolyzes the Cys-Gly bond of Cys-Gly-S-conjugates. Involved in the formation of the human body odorant 3-methyl-3-sulfanylhexan-1-ol (3M3SH) from odorless axilla secretions. Catalyzes the hydrolysis of the Cys-Gly bond of the Cys-Gly-S-conjugate of 3M3SH, a key precursor secreted by apocrine glands in human axilla skin. The Cys-S-conjugate obtained is then cleaved by the Cys-S-conjugate beta-lyase MetC, which finally releases 3M3SH. The polypeptide is Cysteinylglycine-S-conjugate dipeptidase (Corynebacterium striatum).